We begin with the raw amino-acid sequence, 519 residues long: Protein M35 (519 aa).

The interval 485 to 519 (PVRPIRGGGQRMANMRGARPYSTVQRGRRRHESEV) is disordered. Positions 510 to 519 (RGRRRHESEV) are enriched in basic residues.

The protein resides in the host nucleus. Its function is as follows. Plays a role in the inhibition of host type I interferon production within the host nucleus. Targets specifically the NF-kappa-B-mediated interferon-beta transcription. The chain is Protein M35 (M35) from Mus musculus (Mouse).